A 294-amino-acid polypeptide reads, in one-letter code: Flavin-dependent thymidylate synthase (294 aa).

The ThyX domain maps to 27-250 (GFIRVIDYMG…PFTYEAFEEY (224 aa)). FAD contacts are provided by residues threonine 73, 96–98 (RHR), and glutamate 104. Residues 93-96 (QWIR), 104-108 (EYSAR), and arginine 189 each bind dUMP. Positions 96–106 (RHRTASVNEYS) match the ThyX motif motif. FAD-binding positions include 205-207 (NLH) and histidine 211. Arginine 216 is a dUMP binding site. Arginine 216 acts as the Involved in ionization of N3 of dUMP, leading to its activation in catalysis.

The protein belongs to the thymidylate synthase ThyX family. As to quaternary structure, homotetramer. Requires FAD as cofactor.

It catalyses the reaction dUMP + (6R)-5,10-methylene-5,6,7,8-tetrahydrofolate + NADPH + H(+) = dTMP + (6S)-5,6,7,8-tetrahydrofolate + NADP(+). It functions in the pathway pyrimidine metabolism; dTTP biosynthesis. In terms of biological role, catalyzes the reductive methylation of 2'-deoxyuridine-5'-monophosphate (dUMP) to 2'-deoxythymidine-5'-monophosphate (dTMP) while utilizing 5,10-methylenetetrahydrofolate (mTHF) as the methyl donor, and NADPH and FADH(2) as the reductant. The chain is Flavin-dependent thymidylate synthase from Rickettsia typhi (strain ATCC VR-144 / Wilmington).